A 128-amino-acid chain; its full sequence is Sulfurtransferase TusD (128 aa).

Cysteine 78 functions as the Cysteine persulfide intermediate in the catalytic mechanism.

It belongs to the DsrE/TusD family. In terms of assembly, heterohexamer, formed by a dimer of trimers. The hexameric TusBCD complex contains 2 copies each of TusB, TusC and TusD. The TusBCD complex interacts with TusE.

Its subcellular location is the cytoplasm. Its function is as follows. Part of a sulfur-relay system required for 2-thiolation of 5-methylaminomethyl-2-thiouridine (mnm(5)s(2)U) at tRNA wobble positions. Accepts sulfur from TusA and transfers it in turn to TusE. This is Sulfurtransferase TusD from Escherichia coli O7:K1 (strain IAI39 / ExPEC).